A 131-amino-acid chain; its full sequence is Methylglyoxal synthase (131 aa).

Positions 1–131 (MKIALIAHDK…GDLDYRKLRK (131 aa)) constitute an MGS-like domain. Substrate-binding positions include histidine 8, lysine 12, 34–37 (TGTT), and 54–55 (SG). The active-site Proton donor/acceptor is aspartate 60. Histidine 87 lines the substrate pocket.

Belongs to the methylglyoxal synthase family.

It catalyses the reaction dihydroxyacetone phosphate = methylglyoxal + phosphate. In terms of biological role, catalyzes the formation of methylglyoxal from dihydroxyacetone phosphate. In Bacillus cereus (strain ATCC 10987 / NRS 248), this protein is Methylglyoxal synthase.